The following is a 74-amino-acid chain: uncharacterized protein (74 aa).

The N-terminal stretch at 1–25 (MMMTDLPENIRKTAVALLRLGEATA) is a signal peptide.

This is an uncharacterized protein from Archaeoglobus fulgidus (strain ATCC 49558 / DSM 4304 / JCM 9628 / NBRC 100126 / VC-16).